The following is a 152-amino-acid chain: Acidic phospholipase A2 homolog textilotoxin D chain (152 aa).

The signal sequence occupies residues 1–19 (MHPAHLLVLLGVCVSLLGA). 7 disulfides stabilise this stretch: C38-C104, C54-C151, C56-C72, C71-C132, C78-C125, C88-C118, and C111-C123. Residue N112 is glycosylated (N-linked (GlcNAc...) asparagine).

It belongs to the phospholipase A2 family. Group I subfamily. D49 sub-subfamily. As to quaternary structure, heterohexamer. 2 forms exist: 2 A or 2 B chains, 2 C chains and 2 covalently-linked D chains, and 1 A or 1 B, 1 C, 2 covalently-linked D chains and 2 differentially glycosylated covalently-linked D chains. Textilotoxin was originally described as pentameric. As to expression, expressed by the venom gland.

It is found in the secreted. Snake venom oligomeric phospholipase A2 that has potent presynaptic neurotoxicity. Chain D is not itself neurotoxic, but it is essential for the neurotoxicity of textilotoxin. Chain D possesses a very low phospholipase activity. In Pseudonaja textilis (Eastern brown snake), this protein is Acidic phospholipase A2 homolog textilotoxin D chain.